The primary structure comprises 714 residues: Polynucleotide 5'-hydroxyl-kinase NOL9 (714 aa).

A2 is subject to N-acetylalanine. A Nucleolar localization signal motif is present at residues 31–47; it reads RRGRRRFGVLTRVELRR. The interval 80 to 133 is disordered; the sequence is ARSRPAPRSPPTPSVPPAPCTASATCSLLNPRNHSTPQSRAGRPVRKVSPNVTQ. The span at 86-98 shows a compositional bias: pro residues; the sequence is PRSPPTPSVPPAP. Positions 107–118 are enriched in polar residues; that stretch reads LLNPRNHSTPQS. A Phosphoserine modification is found at S128. Residue 322–329 coordinates ATP; that stretch reads GACDIGKS. The tract at residues 495 to 714 is interaction with LAS1L; it reads FTYEEKESSP…PRHKLRQRRK (220 aa). Residue K500 forms a Glycyl lysine isopeptide (Lys-Gly) (interchain with G-Cter in SUMO2) linkage. A Phosphoserine modification is found at S502.

It belongs to the Clp1 family. NOL9/GRC3 subfamily. In terms of assembly, interacts with PELP1, WDR18 and SENP3. Interacts with LAS1L to form an ITS2 pre-rRNA endonuclease-kinase complex.

The protein resides in the nucleus. Its subcellular location is the nucleolus. The enzyme catalyses a 5'-end dephospho-2'-deoxyribonucleoside-DNA + ATP = a 5'-end 5'-phospho-2'-deoxyribonucleoside-DNA + ADP + H(+). It carries out the reaction a 5'-end dephospho-ribonucleoside-RNA + ATP = a 5'-end 5'-phospho-ribonucleoside-RNA + ADP + H(+). Its function is as follows. Polynucleotide kinase that can phosphorylate the 5'-hydroxyl groups of single-stranded and double-stranded RNA and DNA substrates. Involved in rRNA processing and its kinase activity is required for the processing of the 32S precursor into 5.8S and 28S rRNAs, more specifically for the generation of the major 5.8S(S) form. Required for the efficient pre-rRNA processing of internal transcribed spacer 2 (ITS2). Associates with LAS1L to form an ITS2 pre-rRNA endonuclease-kinase complex and is responsible for the transport of this complex into the nucleolus. The polypeptide is Polynucleotide 5'-hydroxyl-kinase NOL9 (Mus musculus (Mouse)).